The chain runs to 929 residues: Pyruvate dehydrogenase E1 component (929 aa).

Lys375 is covalently cross-linked (Isoglutamyl lysine isopeptide (Lys-Gln) (interchain with Q-Cter in protein Pup)).

In terms of assembly, homodimer. Part of the PDH complex, consisting of multiple copies of AceE (E1), DlaT (E2) and Lpd (E3). Mg(2+) is required as a cofactor. It depends on thiamine diphosphate as a cofactor.

It catalyses the reaction N(6)-[(R)-lipoyl]-L-lysyl-[protein] + pyruvate + H(+) = N(6)-[(R)-S(8)-acetyldihydrolipoyl]-L-lysyl-[protein] + CO2. Its function is as follows. Component of the pyruvate dehydrogenase (PDH) complex, that catalyzes the overall conversion of pyruvate to acetyl-CoA and CO(2). AceE has reductase activity with pyruvate but does not react with 2-oxoglutarate. This Mycolicibacterium smegmatis (strain ATCC 700084 / mc(2)155) (Mycobacterium smegmatis) protein is Pyruvate dehydrogenase E1 component (aceE).